An 849-amino-acid polypeptide reads, in one-letter code: ATP-binding cassette sub-family B member 6 (849 aa).

The Lumenal portion of the chain corresponds to 1–25 (MVRLGSYCEHNGSISQAWLDSGLSP). The tract at residues 1-195 (MVRLGSYCEH…TLFLFVLGIR (195 aa)) is required for the lysosomal targeting. Residues 1–227 (MVRLGSYCEH…SQPLLRDPNQ (227 aa)) form a required for ATPase activity region. C8 and C26 form a disulfide bridge. N11 carries N-linked (GlcNAc...) asparagine glycosylation. The helical transmembrane segment at 26-46 (CFYFTLVPSVLLSFSFLLGAL) threads the bilayer. Over 47–72 (QSALYARHSTTMEPKYIPRSRLYRLQ) the chain is Cytoplasmic. Residues 73-93 (IVLSVVLILQSVIGLIWQAAG) form a helical membrane-spanning segment. Over 94–98 (TDVVY) the chain is Lumenal. Residues 99–119 (GYMIVHGCLSVVAWGFSLWLL) traverse the membrane as a helical segment. At 120-136 (HLERTRALVREKSRGHG) the chain is on the cytoplasmic side. The helical transmembrane segment at 137 to 157 (VVLLLFWALAFAAENLAFISW) threads the bilayer. At 158 to 173 (QSPNWWWLSRDTVPQK) the chain is on the lumenal side. A helical membrane pass occupies residues 174–194 (VQFGLWITRYVCTLFLFVLGI). The Cytoplasmic portion of the chain corresponds to 195–254 (RAPGRPRKPYIVLINEDERDVETSQPLLRDPNQSTWQGFKKKLLLVMQYIWPRRNIPLQL). The chain crosses the membrane as a helical span at residues 255–275 (LVALCMGLMGLERAINVFVPI). The ABC transmembrane type-1 domain maps to 256-547 (VALCMGLMGL…FGTYYRMIQS (292 aa)). Residues 276-291 (YAKKIVDGLTEDSTWN) are Lumenal-facing. Residues 292–312 (ILAVTVCIYVLLKFLQGGGAG) form a helical membrane-spanning segment. Residues 313 to 373 (TTGFLSNLRT…VDRGTSSINS (61 aa)) lie on the Cytoplasmic side of the membrane. A helical transmembrane segment spans residues 374–394 (LLSYIVFSILPTIADIVIGIV). At 395 to 401 (YFTSSFN) the chain is on the lumenal side. A helical membrane pass occupies residues 402-422 (AWFGLIIFVCMTLYLTLTIII). Residues 423 to 492 (TEWRTKYRRE…ASLAMLNQTQ (70 aa)) are Cytoplasmic-facing. The helical transmembrane segment at 493–513 (NLIIGLGLLAGSLLCAYFVTE) threads the bilayer. Residues 514–520 (NKFKVGD) lie on the Lumenal side of the membrane. A helical membrane pass occupies residues 521–541 (YVLFGTYIIQLYTPLNWFGTY). The Cytoplasmic portion of the chain corresponds to 542 to 849 (YRMIQSSFID…PPKATPRRGH (308 aa)). An ABC transporter domain is found at 581–815 (IEFENVHFSY…GGVYAGMWQK (235 aa)). Residues Y590 and 614–625 (GPSGSGKSTIIR) contribute to the ATP site. The span at 814-825 (QKQQSGSESSSD) shows a compositional bias: low complexity. A disordered region spans residues 814–849 (QKQQSGSESSSDSDSERKDRTSEKLQPPKATPRRGH). The span at 827 to 836 (DSERKDRTSE) shows a compositional bias: basic and acidic residues.

The protein belongs to the ABC transporter superfamily. ABCB family. Heavy Metal importer (TC 3.A.1.210) subfamily. Homodimer. Post-translationally, N-glycosylated.

Its subcellular location is the cell membrane. The protein resides in the mitochondrion outer membrane. It localises to the endoplasmic reticulum membrane. The protein localises to the golgi apparatus membrane. It is found in the endosome membrane. Its subcellular location is the lysosome membrane. The protein resides in the late endosome membrane. It localises to the early endosome membrane. The protein localises to the secreted. It is found in the extracellular exosome. Its subcellular location is the mitochondrion. The protein resides in the endosome. It localises to the multivesicular body membrane. The protein localises to the melanosome membrane. It catalyses the reaction heme b(in) + ATP + H2O = heme b(out) + ADP + phosphate + H(+). The enzyme catalyses coproporphyrin III(in) + ATP + H2O = coproporphyrin III(out) + ADP + phosphate + H(+). It carries out the reaction pheophorbide a(in) + ATP + H2O = pheophorbide a(out) + ADP + phosphate + H(+). The catalysed reaction is coproporphyrinogen III(in) + ATP + H2O = coproporphyrinogen III(out) + ADP + phosphate + H(+). It catalyses the reaction protoporphyrin IX(in) + ATP + H2O = protoporphyrin IX(out) + ADP + phosphate + H(+). The enzyme catalyses coproporphyrin I(in) + ATP + H2O = coproporphyrin I(out) + ADP + phosphate + H(+). It carries out the reaction uroporphyrin I(in) + ATP + H2O = uroporphyrin I(out) + ADP + phosphate + H(+). The catalysed reaction is uroporphyrin III(in) + ATP + H2O = uroporphyrin III(out) + ADP + phosphate + H(+). Functionally, ATP-dependent transporter that catalyzes the transport of a broad-spectrum of porphyrins from the cytoplasm to the extracellular space through the plasma membrane or into the vesicle lumen. May also function as an ATP-dependent importer of porphyrins from the cytoplasm into the mitochondria, in turn may participate in the de novo heme biosynthesis regulation and in the coordination of heme and iron homeostasis during phenylhydrazine stress. May also play a key role in the early steps of melanogenesis producing PMEL amyloid fibrils. In vitro, it confers to cells a resistance to toxic metal such as arsenic and cadmium and against chemotherapeutics agent such as 5-fluorouracil, SN-38 and vincristin. In addition may play a role in the transition metal homeostasis. This chain is ATP-binding cassette sub-family B member 6 (abcb6), found in Xenopus tropicalis (Western clawed frog).